Consider the following 568-residue polypeptide: Proline--tRNA ligase (568 aa).

This sequence belongs to the class-II aminoacyl-tRNA synthetase family. ProS type 1 subfamily. Homodimer.

It localises to the cytoplasm. The enzyme catalyses tRNA(Pro) + L-proline + ATP = L-prolyl-tRNA(Pro) + AMP + diphosphate. Its function is as follows. Catalyzes the attachment of proline to tRNA(Pro) in a two-step reaction: proline is first activated by ATP to form Pro-AMP and then transferred to the acceptor end of tRNA(Pro). As ProRS can inadvertently accommodate and process non-cognate amino acids such as alanine and cysteine, to avoid such errors it has two additional distinct editing activities against alanine. One activity is designated as 'pretransfer' editing and involves the tRNA(Pro)-independent hydrolysis of activated Ala-AMP. The other activity is designated 'posttransfer' editing and involves deacylation of mischarged Ala-tRNA(Pro). The misacylated Cys-tRNA(Pro) is not edited by ProRS. This chain is Proline--tRNA ligase, found in Lysinibacillus sphaericus (strain C3-41).